Here is a 602-residue protein sequence, read N- to C-terminus: Elongation factor 4 (602 aa).

Residues 7 to 189 (SKIRNFCIIA…AIVRRVPPPQ (183 aa)) form the tr-type G domain. GTP contacts are provided by residues 19-24 (DHGKST) and 136-139 (NKVD).

It belongs to the TRAFAC class translation factor GTPase superfamily. Classic translation factor GTPase family. LepA subfamily.

The protein resides in the cell inner membrane. The enzyme catalyses GTP + H2O = GDP + phosphate + H(+). Its function is as follows. Required for accurate and efficient protein synthesis under certain stress conditions. May act as a fidelity factor of the translation reaction, by catalyzing a one-codon backward translocation of tRNAs on improperly translocated ribosomes. Back-translocation proceeds from a post-translocation (POST) complex to a pre-translocation (PRE) complex, thus giving elongation factor G a second chance to translocate the tRNAs correctly. Binds to ribosomes in a GTP-dependent manner. In Prochlorococcus marinus (strain MIT 9301), this protein is Elongation factor 4.